Reading from the N-terminus, the 398-residue chain is uncharacterized protein (398 aa).

The helical transmembrane segment at 88–108 threads the bilayer; the sequence is IGFTIGFAIFFILLFLLSNMV.

The protein to B.megaterium SpoIV.

It is found in the cell membrane. This is an uncharacterized protein from Bacillus subtilis (strain 168).